The following is a 417-amino-acid chain: Mast cell carboxypeptidase A (417 aa).

An N-terminal signal peptide occupies residues 1–15 (MRFFLLMAVIYTTLA). Positions 16-109 (IAPVHFDREK…IEKQFDVKDE (94 aa)) are cleaved as a propeptide — activation peptide. The 295-residue stretch at 118-412 (KYNDWDKIVS…LSVKFIAKYI (295 aa)) folds into the Peptidase M14 domain. Disulfide bonds link Cys173–Cys186 and Cys245–Cys268. Positions 176 and 179 each coordinate Zn(2+). His304 is a Zn(2+) binding site. Glu378 (proton donor/acceptor) is an active-site residue.

This sequence belongs to the peptidase M14 family. Zn(2+) serves as cofactor.

Its subcellular location is the cytoplasmic vesicle. The protein localises to the secretory vesicle. The enzyme catalyses Release of a C-terminal amino acid, but little or no action with -Asp, -Glu, -Arg, -Lys or -Pro.. This is Mast cell carboxypeptidase A (Cpa3) from Mus musculus (Mouse).